The primary structure comprises 745 residues: Probable endochitinase ARB_07371 (745 aa).

An N-terminal signal peptide occupies residues 1–23; the sequence is MALPKTIMAFIAFISFLVSTTFA. The GH18 domain maps to 30 to 351; the sequence is TNVVTYWGQG…SNIKRLLLNN (322 aa). Glu178 serves as the catalytic Proton donor. Disordered stretches follow at residues 351–372 and 395–446; these read NDPSRPTTTSKTMSSTKTSMST and WSMP…TTEI. Positions 357-372 are enriched in low complexity; sequence TTTSKTMSSTKTSMST. N-linked (GlcNAc...) asparagine glycosylation is found at Asn438 and Asn484. The tract at residues 651 to 715 is disordered; sequence SEPMTPTQVP…EMGGNGGDRT (65 aa). The GPI-anchor amidated glycine moiety is linked to residue Gly720. Residues 721–745 constitute a propeptide, removed in mature form; the sequence is GAGVVSPSFSVVVIVLGSIVYHIMQ.

It belongs to the glycosyl hydrolase 18 family. Chitinase class III subfamily.

The protein localises to the cell membrane. Its subcellular location is the secreted. The protein resides in the cell wall. The catalysed reaction is Random endo-hydrolysis of N-acetyl-beta-D-glucosaminide (1-&gt;4)-beta-linkages in chitin and chitodextrins.. GPI-anchored chitinase involved in the degradation of chitin, a component of the cell walls of fungi and exoskeletal elements of some animals (including worms and arthropods). Required to reshape the cell wall at the sites where cell wall remodeling and/or cell wall maturation actively take place such as sites of conidia formation. This Arthroderma benhamiae (strain ATCC MYA-4681 / CBS 112371) (Trichophyton mentagrophytes) protein is Probable endochitinase ARB_07371.